A 103-amino-acid chain; its full sequence is MATYAIVKTGGKQYKVAVGDVVKVEKLESEPGAKVSLPVALVVDGAAVTSDADALAKVAVTGEVLEHVKGPKIRIHKFKNKTGYHKRQGHRQQLTVLKVTGIK.

The protein belongs to the bacterial ribosomal protein bL21 family. As to quaternary structure, part of the 50S ribosomal subunit. Contacts protein L20.

Its function is as follows. This protein binds to 23S rRNA in the presence of protein L20. This is Large ribosomal subunit protein bL21 from Mycobacterium marinum (strain ATCC BAA-535 / M).